Reading from the N-terminus, the 85-residue chain is Cell division topological specificity factor (85 aa).

The protein belongs to the MinE family.

In terms of biological role, prevents the cell division inhibition by proteins MinC and MinD at internal division sites while permitting inhibition at polar sites. This ensures cell division at the proper site by restricting the formation of a division septum at the midpoint of the long axis of the cell. This is Cell division topological specificity factor from Shewanella baltica (strain OS223).